We begin with the raw amino-acid sequence, 543 residues long: MYRSHNNNNNYHSRNDGSNGRINKPRDPKSQDKYVAYQQNIEQQLASQEKKQAYRRITDHGNNMGRWYIEKSLGLTNRSQQAIGTIRPESSYLIDLLPSLAYSSSFNLNRRNNKNNLAVLDLQTKFVHLSSNKVKHTINTVKWTPEGRRLLVASHSGEFTLWNGMTFNFETIMQAHESPILTMKYSNHDEWLLSGDQNGTVKYWQPNFNNVNNISAHANGVRDIAFSPNDSKFLTCGDDSAIKIWNFNNGKEERTLSGHHWEVKSADWHPNLGLIVSGSKDNLVKLWDPRSANCVSTLHGFKHTVNKTRFQPNGTARLLASVSRDRSCRIFDLRTMKDMLVIRDSETDLSCVAWHPIHASMVTTAAYNGSISNFLLDSYIPDSNESVPKRSNNNSNLSTNTNNTIDAVQKIPYAHEKAIHAVEYHPLGHLLCTAGSDKTARFWSRARPNDPMAWKDAVYTDCKAGAWYYSVNNNVNAVMEDPNAVKNEDDEIANNDDPLSNSGRRRGVGASASGGATGSVPGLRSRNETPNNGSYAIPGLRGF.

Residues 1–12 are compositionally biased toward low complexity; it reads MYRSHNNNNNYH. The segment at 1-31 is disordered; the sequence is MYRSHNNNNNYHSRNDGSNGRINKPRDPKSQ. WD repeat units lie at residues 133–172, 175–215, 216–255, 258–297, 300–341, 344–384, and 414–453; these read KVKH…FETI, AHES…NNIS, AHAN…EERT, GHHW…CVST, GFKH…DMLV, DSET…PDSN, and AHEK…DPMA. A disordered region spans residues 486–543; it reads KNEDDEIANNDDPLSNSGRRRGVGASASGGATGSVPGLRSRNETPNNGSYAIPGLRGF.

Its subcellular location is the nucleus. Functionally, required for 3'-end cleavage and polyadenylation of pre-mRNAs. Also involved in chromosome segregation where it has a role in chromosome attachment to the mitotic spindle. This is Polyadenylation factor subunit 2 (PFS2) from Candida albicans (strain SC5314 / ATCC MYA-2876) (Yeast).